We begin with the raw amino-acid sequence, 374 residues long: Retron Eco8 reverse transcriptase (374 aa).

One can recognise a Reverse transcriptase domain in the interval 25 to 252 (ENIITQSAIP…KEISINGYVI (228 aa)). Residues Asp-107, Asp-200, and Asp-201 each contribute to the Mg(2+) site.

Belongs to the bacterial reverse transcriptase family.

The catalysed reaction is DNA(n) + a 2'-deoxyribonucleoside 5'-triphosphate = DNA(n+1) + diphosphate. Reverse transcriptase (RT) component of antiviral defense system retron Eco8, composed of this RT, the following endonuclease and a non-coding RNA (ncRNA) encoded between them. Expression of retron Eco8 confers protection against bacteriophages T4, T6, T7 and SECphi4, SECphi6 and SECphi18. At multiplicity of infection (MOI) of 0.02 cultures slow growth when infected with SECphi4 but do not collapse, at MOI 2 cultures collapse. Responsible for synthesis of msDNA (a branched molecule with RNA linked by a 2',5'-phosphodiester bond to ssDNA). The retron transcript serves as primer (from a conserved internal G residue) and template for the reaction, and codes for the RT. The chain is Retron Eco8 reverse transcriptase from Escherichia coli.